Here is a 171-residue protein sequence, read N- to C-terminus: Sec-independent protein translocase protein TatB (171 aa).

Residues Met1 to Gly21 form a helical membrane-spanning segment. The segment at Lys117 to Pro171 is disordered. A compositionally biased stretch (polar residues) spans Ala130 to Glu139.

It belongs to the TatB family. The Tat system comprises two distinct complexes: a TatABC complex, containing multiple copies of TatA, TatB and TatC subunits, and a separate TatA complex, containing only TatA subunits. Substrates initially bind to the TatABC complex, which probably triggers association of the separate TatA complex to form the active translocon.

The protein resides in the cell inner membrane. Functionally, part of the twin-arginine translocation (Tat) system that transports large folded proteins containing a characteristic twin-arginine motif in their signal peptide across membranes. Together with TatC, TatB is part of a receptor directly interacting with Tat signal peptides. TatB may form an oligomeric binding site that transiently accommodates folded Tat precursor proteins before their translocation. The sequence is that of Sec-independent protein translocase protein TatB from Escherichia coli O157:H7.